We begin with the raw amino-acid sequence, 761 residues long: Xaa-Pro dipeptidyl-peptidase (761 aa).

Catalysis depends on charge relay system residues serine 347, aspartate 467, and histidine 497.

The protein belongs to the peptidase S15 family. In terms of assembly, homodimer.

The protein resides in the cytoplasm. The enzyme catalyses Hydrolyzes Xaa-Pro-|- bonds to release unblocked, N-terminal dipeptides from substrates including Ala-Pro-|-p-nitroanilide and (sequentially) Tyr-Pro-|-Phe-Pro-|-Gly-Pro-|-Ile.. Its function is as follows. Removes N-terminal dipeptides sequentially from polypeptides having unsubstituted N-termini provided that the penultimate residue is proline. The chain is Xaa-Pro dipeptidyl-peptidase from Streptococcus agalactiae serotype Ia (strain ATCC 27591 / A909 / CDC SS700).